The chain runs to 136 residues: Large ribosomal subunit protein uL16 (136 aa).

The protein belongs to the universal ribosomal protein uL16 family. Part of the 50S ribosomal subunit.

In terms of biological role, binds 23S rRNA and is also seen to make contacts with the A and possibly P site tRNAs. This chain is Large ribosomal subunit protein uL16, found in Proteus mirabilis (strain HI4320).